The primary structure comprises 218 residues: Small ribosomal subunit protein uS3c (218 aa).

Positions 47-118 constitute a KH type-2 domain; the sequence is VQKNMRISSG…RLNIAITRVA (72 aa).

This sequence belongs to the universal ribosomal protein uS3 family. Part of the 30S ribosomal subunit.

The protein resides in the plastid. Its subcellular location is the chloroplast. In Calycanthus floridus var. glaucus (Eastern sweetshrub), this protein is Small ribosomal subunit protein uS3c (rps3).